A 363-amino-acid polypeptide reads, in one-letter code: 3-isopropylmalate dehydrogenase (363 aa).

78–91 (GPKWEHLPPDQQPE) provides a ligand contact to NAD(+). The substrate site is built by R99, R109, R138, and D227. Residues D227, D251, and D255 each coordinate Mg(2+). 285-297 (GSAPDIAGKNIAN) contacts NAD(+).

Belongs to the isocitrate and isopropylmalate dehydrogenases family. LeuB type 1 subfamily. In terms of assembly, homodimer. It depends on Mg(2+) as a cofactor. Mn(2+) serves as cofactor.

The protein resides in the cytoplasm. It carries out the reaction (2R,3S)-3-isopropylmalate + NAD(+) = 4-methyl-2-oxopentanoate + CO2 + NADH. The protein operates within amino-acid biosynthesis; L-leucine biosynthesis; L-leucine from 3-methyl-2-oxobutanoate: step 3/4. Catalyzes the oxidation of 3-carboxy-2-hydroxy-4-methylpentanoate (3-isopropylmalate) to 3-carboxy-4-methyl-2-oxopentanoate. The product decarboxylates to 4-methyl-2 oxopentanoate. The sequence is that of 3-isopropylmalate dehydrogenase from Shigella sonnei (strain Ss046).